The following is a 650-amino-acid chain: GATA zinc finger domain-containing protein 11 (650 aa).

Low complexity predominate over residues 16–79; it reads LYNNTNTNSN…NSSNSLSSSF (64 aa). 4 disordered regions span residues 16–96, 111–181, 221–335, and 409–515; these read LYNN…SGYN, KRSN…TTPL, NNSN…NNNK, and RIFG…NKRK. Residues 116 to 129 are compositionally biased toward polar residues; it reads LDDNMSVPTLQNFT. Low complexity-rich tracts occupy residues 130–180 and 221–260; these read NNNN…PTTP and NNSNGINNNNHNNNHNNSNNNNNNNSNSNSNNHNNHNNNN. Residues 261-272 show a composition bias toward polar residues; that stretch reads QSIVPQSIHLQS. Over residues 273–334 the composition is skewed to low complexity; that stretch reads TTPQIQPLSL…NNSYNTNNNN (62 aa). Positions 425 to 434 are enriched in basic residues; sequence RPRRFRKSKV. The span at 442–511 shows a compositional bias: low complexity; that stretch reads HNNNNNNINN…GNGNTNSTNN (70 aa). The GATA-type zinc finger occupies 522-547; sequence CTSCGTTSSPEWRKGPAGNQSLCNAC. The interval 619 to 650 is disordered; that stretch reads QQQQQQQQQQQNHHHQQLQQQQQQQQQQQLHH.

In terms of biological role, transcription factor that regulates morphogenetic cell movement during development. In Dictyostelium discoideum (Social amoeba), this protein is GATA zinc finger domain-containing protein 11 (gtaK).